Reading from the N-terminus, the 92-residue chain is UPF0237 protein MM_0082 (92 aa).

An ACT domain is found at isoleucine 7–glutamine 81.

The protein belongs to the UPF0237 family.

The polypeptide is UPF0237 protein MM_0082 (Methanosarcina mazei (strain ATCC BAA-159 / DSM 3647 / Goe1 / Go1 / JCM 11833 / OCM 88) (Methanosarcina frisia)).